The sequence spans 47 residues: Accessory gland peptide Acp33A (47 aa).

Residues 1 to 21 (MLPSKRVPFLFTIILFLAGLG) form the signal peptide.

As to expression, main cells of accessory gland and seminal fluid.

It is found in the secreted. Its function is as follows. Responsible for physiological and behavioral changes in mated female flies. This Drosophila melanogaster (Fruit fly) protein is Accessory gland peptide Acp33A (Acp33A).